Here is a 242-residue protein sequence, read N- to C-terminus: uncharacterized protein (242 aa).

S-adenosyl-L-methionine contacts are provided by G198, I218, and L227.

Belongs to the class IV-like SAM-binding methyltransferase superfamily. RNA methyltransferase TrmH family.

This is an uncharacterized protein from Mycoplasma pneumoniae (strain ATCC 29342 / M129 / Subtype 1) (Mycoplasmoides pneumoniae).